A 131-amino-acid chain; its full sequence is Small ribosomal subunit protein eS24 (131 aa).

A disordered region spans residues 93 to 131; it reads RHGLYEKKKTSRKQRKERKNRMKKVRGTKKASVGAAGKK. The span at 101 to 121 shows a compositional bias: basic residues; the sequence is KTSRKQRKERKNRMKKVRGTK.

Belongs to the eukaryotic ribosomal protein eS24 family. Component of the small ribosomal subunit. Part of the small subunit (SSU) processome, composed of more than 70 proteins and the RNA chaperone small nucleolar RNA (snoRNA) U3.

The protein resides in the cytoplasm. Its subcellular location is the nucleus. It is found in the nucleolus. Its function is as follows. Component of the small ribosomal subunit. The ribosome is a large ribonucleoprotein complex responsible for the synthesis of proteins in the cell. Required for processing of pre-rRNA and maturation of 40S ribosomal subunits. Part of the small subunit (SSU) processome, first precursor of the small eukaryotic ribosomal subunit. During the assembly of the SSU processome in the nucleolus, many ribosome biogenesis factors, an RNA chaperone and ribosomal proteins associate with the nascent pre-rRNA and work in concert to generate RNA folding, modifications, rearrangements and cleavage as well as targeted degradation of pre-ribosomal RNA by the RNA exosome. The protein is Small ribosomal subunit protein eS24 (rps24) of Ictalurus punctatus (Channel catfish).